The following is a 211-amino-acid chain: Ribosomal RNA small subunit methyltransferase G (211 aa).

S-adenosyl-L-methionine contacts are provided by residues glycine 79, leucine 84, 130-131, and arginine 145; that span reads VE.

It belongs to the methyltransferase superfamily. RNA methyltransferase RsmG family.

Its subcellular location is the cytoplasm. It catalyses the reaction guanosine(527) in 16S rRNA + S-adenosyl-L-methionine = N(7)-methylguanosine(527) in 16S rRNA + S-adenosyl-L-homocysteine. Its function is as follows. Specifically methylates the N7 position of guanine in position 527 of 16S rRNA. This is Ribosomal RNA small subunit methyltransferase G from Alteromonas mediterranea (strain DSM 17117 / CIP 110805 / LMG 28347 / Deep ecotype).